The following is a 262-amino-acid chain: Small ribosomal subunit protein eS4 (262 aa).

One can recognise an S4 RNA-binding domain in the interval 42-105 (LPLVVFLRNR…NEHFRLVYDV (64 aa)). One can recognise a KOW domain in the interval 178 to 211 (GRLVMVTGGRNLGRVGVIVHREKHEGGFDLVHIK).

This sequence belongs to the eukaryotic ribosomal protein eS4 family. As to quaternary structure, component of the small ribosomal subunit. Mature ribosomes consist of a small (40S) and a large (60S) subunit. The 40S subunit contains about 32 different proteins and 1 molecule of RNA (18S). The 60S subunit contains 45 different proteins and 3 molecules of RNA (25S, 5.8S and 5S).

It localises to the cytoplasm. Its function is as follows. Component of the ribosome, a large ribonucleoprotein complex responsible for the synthesis of proteins in the cell. The small ribosomal subunit (SSU) binds messenger RNAs (mRNAs) and translates the encoded message by selecting cognate aminoacyl-transfer RNA (tRNA) molecules. The large subunit (LSU) contains the ribosomal catalytic site termed the peptidyl transferase center (PTC), which catalyzes the formation of peptide bonds, thereby polymerizing the amino acids delivered by tRNAs into a polypeptide chain. The nascent polypeptides leave the ribosome through a tunnel in the LSU and interact with protein factors that function in enzymatic processing, targeting, and the membrane insertion of nascent chains at the exit of the ribosomal tunnel. In Candida albicans (strain SC5314 / ATCC MYA-2876) (Yeast), this protein is Small ribosomal subunit protein eS4 (RPS42).